We begin with the raw amino-acid sequence, 745 residues long: Copper-exporting P-type ATPase B (745 aa).

Residues 1–76 (MNNGIDPENE…GMDHSHMDHE (76 aa)) are disordered. The Cytoplasmic portion of the chain corresponds to 1-108 (MNNGIDPENE…HMGNFKQKFW (108 aa)). The span at 36 to 76 (LQEHGKMENMDQHHTHGHMERHQQMDHGHMSGMDHSHMDHE) shows a compositional bias: basic and acidic residues. A run of 3 repeats spans residues 60–71 (MDHGHMSGMDHS), 73–84 (MDHEDMSGMNHS), and 86–97 (MGHENMSGMDHS). The 3 X 12 AA approximate repeats stretch occupies residues 60–97 (MDHGHMSGMDHSHMDHEDMSGMNHSHMGHENMSGMDHS). The chain crosses the membrane as a helical span at residues 109-128 (LSLILAIPIILFSPMMGMSF). The Extracellular segment spans residues 129–139 (PFQVTFPGSNW). The chain crosses the membrane as a helical span at residues 140–160 (VVLVLATILFIYGGQPFLSGA). Residues 161–170 (KMELKQKSPA) lie on the Cytoplasmic side of the membrane. The helical transmembrane segment at 171 to 191 (MMTLIAMGITVAYVYSVYSFI) threads the bilayer. At 192-200 (ANLINPHTH) the chain is on the extracellular side. The helical transmembrane segment at 201 to 217 (VMDFFWELATLIVIMLL) threads the bilayer. The Cytoplasmic segment spans residues 218–359 (GHWIEMNAVS…EFLSDKVAKW (142 aa)). The chain crosses the membrane as a helical span at residues 360 to 379 (LFYVALVVGIIAFIAWLFLA). At 380–388 (NLPDALERM) the chain is on the extracellular side. The helical transmembrane segment at 389–409 (VTVFIIACPHALGLAIPLVVA) threads the bilayer. Topologically, residues 410-703 (RSTSIAAKNG…QNLWWGAGYN (294 aa)) are cytoplasmic. Aspartate 440 functions as the 4-aspartylphosphate intermediate in the catalytic mechanism. Residues aspartate 638 and aspartate 642 each coordinate Mg(2+). A helical transmembrane segment spans residues 704–721 (IIAIPLAAGILAPIGLIL). The Extracellular segment spans residues 722-723 (SP). The chain crosses the membrane as a helical span at residues 724-744 (AVGAVLMSLSTVVVALNALTL). Position 745 (lysine 745) is a topological domain, cytoplasmic.

This sequence belongs to the cation transport ATPase (P-type) (TC 3.A.3) family. Type IB subfamily. In terms of assembly, monomer.

It localises to the cell membrane. The catalysed reaction is Cu(+)(in) + ATP + H2O = Cu(+)(out) + ADP + phosphate + H(+). Its activity is regulated as follows. Inhibited by vanadate. Involved in copper export. Can also export silver. In Enterococcus hirae (strain ATCC 9790 / DSM 20160 / JCM 8729 / LMG 6399 / NBRC 3181 / NCIMB 6459 / NCDO 1258 / NCTC 12367 / WDCM 00089 / R), this protein is Copper-exporting P-type ATPase B (copB).